The following is a 537-amino-acid chain: Frizzled-4 (537 aa).

Residues 1–36 (MAWPGTGPSSRGAPGGVGLRLGLLLQFLLLLRPTLG) form the signal peptide. Topologically, residues 37–212 (FGDEEERRCD…KCGYDAGLYS (176 aa)) are extracellular. The 122-residue stretch at 40 to 161 (EEERRCDPIR…NDHNHMCMEG (122 aa)) folds into the FZ domain. 8 disulfide bridges follow: Cys-45–Cys-106, Cys-53–Cys-99, Cys-90–Cys-128, Cys-117–Cys-158, Cys-121–Cys-145, Cys-181–Cys-200, Cys-204–Cys-282, and Cys-302–Cys-377. Residue Asn-59 is glycosylated (N-linked (GlcNAc...) asparagine). An N-linked (GlcNAc...) asparagine glycan is attached at Asn-144. A helical transmembrane segment spans residues 213 to 243 (RSAKEFTDIWMAVWASLCFISTTFTVLTFLI). At 244–249 (DSSRFS) the chain is on the cytoplasmic side. The helical transmembrane segment at 250-275 (YPERPIIFLSMCYNIYSIAYIVRLTV) threads the bilayer. The Extracellular segment spans residues 276-299 (GRERISCDFEEAAEPVLIQEGLKN). The chain crosses the membrane as a helical span at residues 300–333 (TGCAIIFLLMYFFGMASSIWWVILTLTWFLAAGL). Residues 334–336 (KWG) are Cytoplasmic-facing. The helical transmembrane segment at 337 to 365 (HEAIEMHSSYFHIAAWAIPAVKTIVILIM) threads the bilayer. The Extracellular portion of the chain corresponds to 366–383 (RLVDADELTGLCYVGNQN). A helical transmembrane segment spans residues 384 to 410 (LDALTGFVVAPLFTYLVIGTLFIAAGL). The Cytoplasmic segment spans residues 411–431 (VALFKIRSNLQKDGTKTDKLE). The helical transmembrane segment at 432–460 (RLMVKIGVFSVLYTVPATCVIACYFYEIS) threads the bilayer. At 461-473 (NWALFRYSADDSN) the chain is on the extracellular side. Residues 474–495 (MAVEMLKIFMSLLVGITSGMWI) form a helical membrane-spanning segment. Residues 496–537 (WSAKTLHTWQKCSNRLVNSGKVKREKRGNGWVKPGKGNETVV) are Cytoplasmic-facing. The Lys-Thr-X-X-X-Trp motif, mediates interaction with the PDZ domain of Dvl family members signature appears at 499–504 (KTLHTW). A PDZ-binding motif is present at residues 535-537 (TVV).

Belongs to the G-protein coupled receptor Fz/Smo family. As to quaternary structure, interacts with MAGI3 and NDP. Component of a complex, at least composed of TSPAN12, FZD4 and norrin (NDP). Interacts (via FZ domain) with TSKU; TSKU competes with WNT2B for binding to FZD4, inhibiting Wnt signaling and repressing peripheral eye development. Interacts with glypican GPC3. Post-translationally, ubiquitinated by ZNRF3, leading to its degradation by the proteasome. Expressed in chondrocytes.

The protein resides in the cell membrane. In terms of biological role, receptor for Wnt proteins. Most frizzled receptors are coupled to the beta-catenin (CTNNB1) canonical signaling pathway, which leads to the activation of disheveled proteins, inhibition of GSK-3 kinase, nuclear accumulation of beta-catenin (CTNNB1) and activation of Wnt target genes. Plays a critical role in retinal vascularization by acting as a receptor for Wnt proteins and norrin (NDP). In retina, it can be activated by Wnt protein-binding and also by Wnt-independent signaling via binding of norrin (NDP), promoting in both cases beta-catenin (CTNNB1) accumulation and stimulation of LEF/TCF-mediated transcriptional programs. A second signaling pathway involving PKC and calcium fluxes has been seen for some family members, but it is not yet clear if it represents a distinct pathway or if it can be integrated in the canonical pathway, as PKC seems to be required for Wnt-mediated inactivation of GSK-3 kinase. Both pathways seem to involve interactions with G-proteins. May be involved in transduction and intercellular transmission of polarity information during tissue morphogenesis and/or in differentiated tissues. Activation by Wnt5A stimulates PKC activity via a G-protein-dependent mechanism. The chain is Frizzled-4 (Fzd4) from Mus musculus (Mouse).